The primary structure comprises 28 residues: C-hordein (28 aa).

The tract at residues 1-28 (RQLNPSSQELQSPQQSYLQQPYPQNPYL) is disordered.

In terms of tissue distribution, developing endosperm.

In terms of biological role, sulfur-poor seed storage protein. This is C-hordein from Hordeum vulgare subsp. spontaneum (Wild barley).